The sequence spans 61 residues: Metallothionein-1A (61 aa).

Met-1 carries the post-translational modification N-acetylmethionine. Positions 1–29 (MDPNCSCPTGGSCSCAGSCTCKACRCPSC) are beta. A divalent metal cation is bound by residues Cys-5, Cys-7, Cys-13, Cys-15, Cys-19, Cys-21, Cys-24, Cys-26, Cys-29, Cys-33, Cys-34, Cys-36, Cys-37, Cys-41, Cys-44, Cys-48, Cys-50, and Cys-57. Residues 30–61 (KKSCCSCCPVGCAKCAQGCVCKGASDKCSCCA) are alpha. Ser-58 carries the post-translational modification Phosphoserine. Positions 59 and 60 each coordinate a divalent metal cation.

The protein belongs to the metallothionein superfamily. Type 1 family. Monomer.

Metallothioneins have a high content of cysteine residues that bind various heavy metals; these proteins are transcriptionally regulated by both heavy metals and glucocorticoids. This is Metallothionein-1A (MT1A) from Bos taurus (Bovine).